Reading from the N-terminus, the 1298-residue chain is Activating molecule in BECN1-regulated autophagy protein 1 (1298 aa).

The interval 1–22 is interaction with DDB1; the sequence is MKVVPEKNAVRILWGRERGARA. Lys-45 is covalently cross-linked (Glycyl lysine isopeptide (Lys-Gly) (interchain with G-Cter in ubiquitin)). 3 WD repeats span residues 51–90, 93–133, and 135–175; these read DSPRSTFLLAFSPDRTLLASTHVNHNIYITEVKTGKCVHS, GHRR…ESWF, and DSNN…AVVK. Ser-52 carries the phosphoserine; by MTOR modification. Residues 254-266 are compositionally biased toward polar residues; sequence IQVGEQSTVQDSA. The interval 254-284 is disordered; the sequence is IQVGEQSTVQDSATPSPPPPPPQPSTERPRT. Positions 268-277 are enriched in pro residues; it reads PSPPPPPPQP. The short motif at 275–281 is the PxP motif 1 element; the sequence is PQPSTER. At Ser-328 the chain carries Phosphoserine. A disordered region spans residues 343–413; it reads FVQTEPFHPP…SRYHREIAPG (71 aa). The span at 354-385 shows a compositional bias: polar residues; that stretch reads QASSTQQDQGLLNRPSAFSTVQSSTAGNTLRN. Residues Ser-394 and Ser-443 each carry the phosphoserine modification. 3 stretches are compositionally biased toward polar residues: residues 458–467, 547–561, and 590–601; these read SQASVYTSAT, HQPTPHSSENNSNLS, and NYSSGEASSSWQ. 4 disordered regions span residues 458-494, 538-561, 590-690, and 747-796; these read SQASVYTSATEGRGFPASGLATESDGGNGSSQNNSGS, IESERPGPSHQPTPHSSENNSNLS, NYSS…DSLR, and RYQQ…NARM. 2 stretches are compositionally biased toward low complexity: residues 602–614 and 628–639; these read VPSSFESVPSSGS and SSSRLELSSSAS. Phosphoserine occurs at positions 635 and 639. The span at 661–674 shows a compositional bias: polar residues; it reads YTQSSRSGTVSQEA. Arg-747 is modified (asymmetric dimethylarginine). Residues 772-781 show a composition bias toward acidic residues; sequence TDLEFEDFED. Ser-1043 is subject to Phosphoserine; by IKKA. An LIR motif is present at residues 1043 to 1052; it reads SGVEYYWDQL. Polar residues predominate over residues 1060–1075; it reads HSNSRSSERPGTSRAT. The segment at 1060–1079 is disordered; that stretch reads HSNSRSSERPGTSRATWRTD. 2 short sequence motifs (TQT motif) span residues 1104–1106 and 1116–1118; these read TQT. Disordered stretches follow at residues 1112–1143, 1190–1214, and 1227–1298; these read QNAETQTEREVPEPGTAASGPGEGEGSEYGAS, RSSQTGTEPGAAHTSSPQPSTSRGL, and SPRT…PRNR. Residues 1191–1212 are compositionally biased toward polar residues; sequence SSQTGTEPGAAHTSSPQPSTSR. A Phosphoserine modification is found at Ser-1205. Residues 1206–1212 carry the PxP motif 2 motif; that stretch reads PQPSTSR.

It belongs to the WD repeat AMBRA1 family. Component of the DCX(AMBRA1) E3 ubiquitin ligase complex, also named CRL4(AMBRA1), at least composed of CUL4 (CUL4A or CUL4B), DDB1, AMBRA1 and RBX1. Interacts with BECN1. Probably forms a complex with BECN1 and PIK3C3. Interacts with BECN2. Interacts with BCL2; leading to prevent interaction with BCN1 and autophagy, interaction is disrupted upon autophagy induction. Interacts with ULK1. Interacts (via PxP motifs) with PPP2CA; enhancing interaction between PPP2CA and MYC or FOXO3. Forms a complex with PPP2CA and BECN1; AMBRA1 and BECN1 components of the complex regulate MYC stability via different pathways. Interacts (TQT motifs) with DYNLL1 and DYNLL2; tethering AMBRA1 and the BECN1-PIK3C3 complex in absence of autophagy. Interacts with TRAF6; interaction is required to mediate 'Lys-63'-linked ubiquitination of ULK1. Interacts with TRIM32; promoting activation of ULK1 by TRIM32 via unanchored 'Lys-63'-linked polyubiquitin chains. Interacts with PRKN. Interacts (via LIR motif) with LC3 (MAP1LC3A, MAP1LC3B or MAP1LC3C). Interacts with HUWE1. Interacts with PTK2/FAK. Interacts with SRC; required for SRC trafficking to autophagosomes. Phosphorylation at Ser-52 by MTOR inhibits its ability to regulate autophagy and mediate ubiquitination of ULK1. Phosphorylation by ULK1 in response to autophagy induction abolishes interaction with DYNLL1 and DYNLL2, releasing AMBRA1 from the cytoskeletal docking site to induce autophagosome nucleation. Phosphorylation by MTOR inhibits interaction with PPP2CA and subsequent dephosphorylation of MYC. Phosphorylation at Ser-1043 by CHUK/IKKA promotes its interaction with ATG8 family proteins GABARAP and MAP1LC3B and its mitophagic activity. In terms of processing, ubiquitinated by RNF2 via 'Lys-48'-linkage in unstressed cells, leading to its degradation by the proteasome. Induction of autophagy promotes stabilization via interaction with CUL4 (CUL4A or CUL4B) and DDB1. Upon prolonged starvation, ubiquitinated and degraded, terminating the autophagy response. Post-translationally, undergoes proteolytic processing by caspase-6 (CASP6), caspase-7 (CASP7) and caspase-8 (CASP8) during apoptosis, resulting in the dismantling of the autophagic machinery and the accomplishment of the programmed cell death program. Also cleaved by calpains during apoptosis, which mediate a complete proteolytic degradation.

It is found in the endoplasmic reticulum. It localises to the cytoplasm. The protein localises to the cytoskeleton. The protein resides in the cytoplasmic vesicle. Its subcellular location is the autophagosome. It is found in the mitochondrion. It localises to the cytosol. The protein localises to the nucleus. The protein resides in the cell junction. Its subcellular location is the focal adhesion. The protein operates within protein modification; protein ubiquitination. Its function is as follows. Substrate-recognition component of a DCX (DDB1-CUL4-X-box) E3 ubiquitin-protein ligase complex involved in cell cycle control and autophagy. The DCX(AMBRA1) complex specifically mediates the polyubiquitination of target proteins such as BECN1, CCND1, CCND2, CCND3, ELOC and ULK1. Acts as an upstream master regulator of the transition from G1 to S cell phase: AMBRA1 specifically recognizes and binds phosphorylated cyclin-D (CCND1, CCND2 and CCND3), leading to cyclin-D ubiquitination by the DCX(AMBRA1) complex and subsequent degradation. By controlling the transition from G1 to S phase and cyclin-D degradation, AMBRA1 acts as a tumor suppressor that promotes genomic integrity during DNA replication and counteracts developmental abnormalities and tumor growth. AMBRA1 also regulates the cell cycle by promoting MYC dephosphorylation and degradation independently of the DCX(AMBRA1) complex: acts via interaction with the catalytic subunit of protein phosphatase 2A (PPP2CA), which enhances interaction between PPP2CA and MYC, leading to MYC dephosphorylation and degradation. Acts as a regulator of Cul5-RING (CRL5) E3 ubiquitin-protein ligase complexes by mediating ubiquitination and degradation of Elongin-C (ELOC) component of CRL5 complexes. Acts as a key regulator of autophagy by modulating the BECN1-PIK3C3 complex: controls protein turnover during neuronal development, and regulates normal cell survival and proliferation. In normal conditions, AMBRA1 is tethered to the cytoskeleton via interaction with dyneins DYNLL1 and DYNLL2. Upon autophagy induction, AMBRA1 is released from the cytoskeletal docking site to induce autophagosome nucleation by mediating ubiquitination of proteins involved in autophagy. The DCX(AMBRA1) complex mediates 'Lys-63'-linked ubiquitination of BECN1, increasing the association between BECN1 and PIK3C3 to promote PIK3C3 activity. In collaboration with TRAF6, AMBRA1 mediates 'Lys-63'-linked ubiquitination of ULK1 following autophagy induction, promoting ULK1 stability and kinase activity. Also activates ULK1 via interaction with TRIM32: TRIM32 stimulates ULK1 through unanchored 'Lys-63'-linked polyubiquitin chains. Also acts as an activator of mitophagy via interaction with PRKN and LC3 proteins (MAP1LC3A, MAP1LC3B or MAP1LC3C); possibly by bringing damaged mitochondria onto autophagosomes. Also activates mitophagy by acting as a cofactor for HUWE1; acts by promoting HUWE1-mediated ubiquitination of MFN2. AMBRA1 is also involved in regulatory T-cells (Treg) differentiation by promoting FOXO3 dephosphorylation independently of the DCX(AMBRA1) complex: acts via interaction with PPP2CA, which enhances interaction between PPP2CA and FOXO3, leading to FOXO3 dephosphorylation and stabilization. May act as a regulator of intracellular trafficking, regulating the localization of active PTK2/FAK and SRC. Also involved in transcription regulation by acting as a scaffold for protein complexes at chromatin. This Homo sapiens (Human) protein is Activating molecule in BECN1-regulated autophagy protein 1.